Here is a 130-residue protein sequence, read N- to C-terminus: Small ribosomal subunit protein uS9 (130 aa).

Positions 98-130 (LKRAGLLTRDPRMKERKKPGLKKARRSPQFSKR) are disordered. Over residues 111-130 (KERKKPGLKKARRSPQFSKR) the composition is skewed to basic residues.

The protein belongs to the universal ribosomal protein uS9 family.

The sequence is that of Small ribosomal subunit protein uS9 (rpsI) from Staphylococcus carnosus (strain TM300).